A 252-amino-acid polypeptide reads, in one-letter code: MSTPARNTTLTSNTPAGAPRLPGAPAPQVLPARPEPLALHASDSALIVVDMQNAYASMGGYVDSAGFDISGAQGTIANIARTIAAARTAGMLVVFLQNGWDAAYVEAGGPGSPNWHKSNALKTMRARPELAGKFLAKGGWDYELIAEMKPQPGDIVVPKTRYSGFFNSTLDSTLRARGIRHLVFTGIATNVCVESTLRDAFHLEYFAVMLEDATHELGGAAIQKASVYNVETFFGWVSTVDDFVRSFAPATA.

The segment covering 1–14 (MSTPARNTTLTSNT) has biased composition (polar residues). Residues 1 to 31 (MSTPARNTTLTSNTPAGAPRLPGAPAPQVLP) form a disordered region. The segment covering 15-27 (PAGAPRLPGAPAP) has biased composition (low complexity). Asp50 (proton acceptor) is an active-site residue. Lys159 is an active-site residue. Cys192 acts as the Nucleophile in catalysis.

The protein belongs to the isochorismatase family. RutB subfamily.

It catalyses the reaction (Z)-3-ureidoacrylate + H2O + H(+) = (Z)-3-aminoacrylate + NH4(+) + CO2. The enzyme catalyses (Z)-3-ureidoacrylate + H2O = (Z)-3-aminoacrylate + carbamate + H(+). It carries out the reaction (Z)-2-methylureidoacrylate + H2O + H(+) = (Z)-2-methylaminoacrylate + NH4(+) + CO2. In terms of biological role, hydrolyzes ureidoacrylate to form aminoacrylate and carbamate. The carbamate hydrolyzes spontaneously, thereby releasing one of the nitrogen atoms of the pyrimidine ring as ammonia and one of its carbon atoms as CO2. The chain is Ureidoacrylate amidohydrolase RutB from Variovorax paradoxus (strain S110).